The chain runs to 220 residues: Probable septum site-determining protein MinC (220 aa).

The protein belongs to the MinC family. As to quaternary structure, interacts with MinD and FtsZ.

In terms of biological role, cell division inhibitor that blocks the formation of polar Z ring septums. Rapidly oscillates between the poles of the cell to destabilize FtsZ filaments that have formed before they mature into polar Z rings. Prevents FtsZ polymerization. In Photobacterium profundum (strain SS9), this protein is Probable septum site-determining protein MinC.